A 365-amino-acid polypeptide reads, in one-letter code: Chorismate synthase (365 aa).

The disordered stretch occupies residues 41–61 (IQKELDRRRPGQSEVSTPRHE). Residue Arg-48 participates in NADP(+) binding. FMN-binding positions include 125–127 (RSS), Gly-285, 300–304 (KPTPS), and Arg-327.

Belongs to the chorismate synthase family. It depends on FMNH2 as a cofactor.

The enzyme catalyses 5-O-(1-carboxyvinyl)-3-phosphoshikimate = chorismate + phosphate. It functions in the pathway metabolic intermediate biosynthesis; chorismate biosynthesis; chorismate from D-erythrose 4-phosphate and phosphoenolpyruvate: step 7/7. Functionally, catalyzes the anti-1,4-elimination of the C-3 phosphate and the C-6 proR hydrogen from 5-enolpyruvylshikimate-3-phosphate (EPSP) to yield chorismate, which is the branch point compound that serves as the starting substrate for the three terminal pathways of aromatic amino acid biosynthesis. This reaction introduces a second double bond into the aromatic ring system. The sequence is that of Chorismate synthase from Methanosarcina barkeri (strain Fusaro / DSM 804).